The chain runs to 106 residues: Starvation responsive small protein A (106 aa).

Residues 15 to 32 (ILLVNAGLISAYGVRIIF) form a helical membrane-spanning segment.

It is found in the cell membrane. Involved in starvation response and aggregation stage of the life cycle. May be involved in fruiting body morphogenesis and spore formation. This is Starvation responsive small protein A from Dictyostelium discoideum (Social amoeba).